Consider the following 575-residue polypeptide: Triokinase/FMN cyclase (575 aa).

The 328-residue stretch at Ser-9 to Trp-336 folds into the DhaK domain. Residues Gly-56–His-59, Lys-109, and Asp-114 contribute to the dihydroxyacetone site. His-221 (tele-hemiaminal-histidine intermediate) is an active-site residue. The tract at residues Lys-348–Gly-367 is disordered. A Phosphoserine modification is found at Ser-350. Residues Lys-372–Glu-571 form the DhaL domain. Residues Asp-401–Cys-404, Ser-446–Ser-447, Gly-486, and Thr-494–Met-495 each bind ATP. Phosphoserine is present on residues Ser-511 and Ser-545. Asp-556–Gly-558 serves as a coordination point for ATP.

Belongs to the dihydroxyacetone kinase (DAK) family. Homodimer. Interacts with IFIH1 (via the CARD domains), the interaction is inhibited by viral infection. It depends on Mg(2+) as a cofactor. Mn(2+) is required as a cofactor. The cofactor is Co(2+). As to expression, detected in erythrocytes (at protein level).

It carries out the reaction dihydroxyacetone + ATP = dihydroxyacetone phosphate + ADP + H(+). The catalysed reaction is D-glyceraldehyde + ATP = D-glyceraldehyde 3-phosphate + ADP + H(+). It catalyses the reaction FAD = riboflavin cyclic-4',5'-phosphate + AMP + H(+). Its activity is regulated as follows. Each activity is inhibited by the substrate(s) of the other. Functionally, catalyzes both the phosphorylation of dihydroxyacetone and of glyceraldehyde, and the splitting of ribonucleoside diphosphate-X compounds among which FAD is the best substrate. Represses IFIH1-mediated cellular antiviral response. The sequence is that of Triokinase/FMN cyclase from Homo sapiens (Human).